A 237-amino-acid polypeptide reads, in one-letter code: LexA repressor (237 aa).

Positions F26–T46 form a DNA-binding region, H-T-H motif. Active-site for autocatalytic cleavage activity residues include S158 and K196.

This sequence belongs to the peptidase S24 family. In terms of assembly, homodimer.

The enzyme catalyses Hydrolysis of Ala-|-Gly bond in repressor LexA.. In terms of biological role, represses a number of genes involved in the response to DNA damage (SOS response), including recA and lexA. In the presence of single-stranded DNA, RecA interacts with LexA causing an autocatalytic cleavage which disrupts the DNA-binding part of LexA, leading to derepression of the SOS regulon and eventually DNA repair. The chain is LexA repressor from Xanthobacter autotrophicus (strain ATCC BAA-1158 / Py2).